Here is a 1205-residue protein sequence, read N- to C-terminus: U2 snRNP component prp10 (1205 aa).

Disordered regions lie at residues 39 to 58 (QKEAAKNSSTNGSVNIEGTQ), 122 to 175 (YADE…GRSY), and 202 to 254 (GTLK…RRSR). Residues 44–58 (KNSSTNGSVNIEGTQ) show a composition bias toward polar residues. Positions 130–153 (MQERQSKKQIQDRESDYQKQRYDR) are enriched in basic and acidic residues. HEAT repeat units follow at residues 393–429 (LRERKILRLLLKVKNGTPPMRKSALRQLTDQARDFGA), 431–473 (ALFN…PFTH), 475–505 (ILVVIEPLLIDEDYYARAEGREIISNLAKAS), 506–540 (GLAHMIATMRPDIDHVDEYVRNTTARAFSVVASAL), 541–578 (GVPALLPFLKAVCRSKKSWQARHTGVRIIQQIALLLGC), 582–619 (PHLKNLVDCIGHGLEDEQQKVRIMTALSLSALAEAATP), 665–702 (HFTRRIMKILLREFNSPDEEMKKIVLKVVSQCASTDGV), 745–782 (VGSRQIVERVVNNFKDESEPYRKMTAETVDKVIGSLGV), 828–865 (PYLPQIVSTILYRLNNKSANVREQAADLVSSITIVLKA), 912–949 (PPIRDLLPRLTPILRNRHEKVQENTIDLVGKIADRGSE), 954–991 (REWMRICFELIDMLKAHKKSIRRAAVNTFGYISKAIGP), 993–1024 (DVLATLLNNLKVQERQNRVCTTVAIAIVAETC), 1025–1061 (MPFTVVPALMADYRTPEMNVQNGVLKSLAFMFEYIGE), 1065–1102 (DYVYAITPLLADALMDRDAVHRQTAASVIKHLSLGCVG), 1107–1142 (DAMIHLLNILWPNILEESPHVINAVREGIDGIRNCI), and 1143–1179 (GVGPIMAYLVQGLFHPSRKVRNTYWTSYNSAYVQSAD).

Belongs to the SF3B1 family. In terms of assembly, belongs to the 40S cdc5-associated complex (or cwf complex), a spliceosome sub-complex reminiscent of a late-stage spliceosome composed of the U2, U5 and U6 snRNAs and at least brr2, cdc5, cwf2/prp3, cwf3/syf1, cwf4/syf3, cwf5/ecm2, spp42/cwf6, cwf7/spf27, cwf8, cwf9, cwf10, cwf11, cwf12, prp45/cwf13, cwf14, cwf15, cwf16, cwf17, cwf18, cwf19, cwf20, cwf21, cwf22, cwf23, cwf24, cwf25, cwf26, cyp7/cwf27, cwf28, cwf29/ist3, lea1, msl1, prp5/cwf1, prp10, prp12/sap130, prp17, prp22, sap61, sap62, sap114, sap145, slu7, smb1, smd1, smd3, smf1, smg1 and syf2.

The protein resides in the nucleus. Contacts pre-mRNA on both sides of the branch site early in spliceosome assembly. The polypeptide is U2 snRNP component prp10 (prp10) (Schizosaccharomyces pombe (strain 972 / ATCC 24843) (Fission yeast)).